A 95-amino-acid chain; its full sequence is Putative septation protein SpoVG (95 aa).

This sequence belongs to the SpoVG family.

Could be involved in septation. The chain is Putative septation protein SpoVG from Brevibacillus brevis (strain 47 / JCM 6285 / NBRC 100599).